Consider the following 715-residue polypeptide: MIYQGKAITVKPLEGGIVELNFDLKGESVNKFNRLTLSELRAAVDAIKADAAVKGVIVTSGKDVFIVGADITEFVDNFQLPDEELMAGNLEANKIFSDFEDLDVPTVAAINGIALGGGLEMCLAADFRVMSATAKVGLPEVKLGIYPGFGGTVRLPRLIGCDNAVEWIASGKENKAEDALKVGAVDAVVAPEQLQAAALDLAKRAVAGELDHKARRQPKLEKLKLNAIEQMMAFETAKGFVAGQAGPNYPAPVEAIKSIQKAANFGRDKALEVEAAGFVKLAKTSVAQSLIGLFLNDQELKKKAKKYDEVAKDVKLAAVLGAGIMGGGIAYQSALKGTPILMKDIREEGIQMGLNEAAKLLGKRVEKGRLTPAKMAEALNGIRPTMSYGDFGNVDIVVEAVVENPKVKQAVLAEVEGAVKEDAIIASNTSTISISLLAQALKRPENFCGMHFFNPVHMMPLVEVIRGEKTGETAIATTVAYAKKMGKSPIVVNDCPGFLVNRVLFPYFGGFAKLLGFGVDFVRIDKVMEKFGWPMGPAYLSDVVGIDTGHHGRDVMAEGFPDRMAVEGKTAVDVMYEANRLGQKNGKGFYAYETDKRGKPKKVTDPQAYEVLKPIVVEQREVTDEDIVNFMMIPLCLETVRCLEDGIVETAAEADMGLIYGIGFPPFRGGALRYIDSIGVAEFVALADKYAELGALYHPTAKLREMAKNGQKFFG.

An enoyl-CoA hydratase/isomerase region spans residues 1–190; sequence MIYQGKAITV…KVGAVDAVVA (190 aa). D297 lines the substrate pocket. Residues 312-715 are 3-hydroxyacyl-CoA dehydrogenase; sequence KDVKLAAVLG…MAKNGQKFFG (404 aa). Residues M325, D344, 401-403, K408, and S430 contribute to the NAD(+) site; that span reads VVE. H451 functions as the For 3-hydroxyacyl-CoA dehydrogenase activity in the catalytic mechanism. N454 lines the NAD(+) pocket. Residues N501 and Y660 each contribute to the substrate site.

It in the N-terminal section; belongs to the enoyl-CoA hydratase/isomerase family. The protein in the C-terminal section; belongs to the 3-hydroxyacyl-CoA dehydrogenase family. As to quaternary structure, heterotetramer of two alpha chains (FadB) and two beta chains (FadA).

The catalysed reaction is a (3S)-3-hydroxyacyl-CoA + NAD(+) = a 3-oxoacyl-CoA + NADH + H(+). The enzyme catalyses a (3S)-3-hydroxyacyl-CoA = a (2E)-enoyl-CoA + H2O. It catalyses the reaction a 4-saturated-(3S)-3-hydroxyacyl-CoA = a (3E)-enoyl-CoA + H2O. It carries out the reaction (3S)-3-hydroxybutanoyl-CoA = (3R)-3-hydroxybutanoyl-CoA. The catalysed reaction is a (3Z)-enoyl-CoA = a 4-saturated (2E)-enoyl-CoA. The enzyme catalyses a (3E)-enoyl-CoA = a 4-saturated (2E)-enoyl-CoA. Its pathway is lipid metabolism; fatty acid beta-oxidation. In terms of biological role, involved in the aerobic and anaerobic degradation of long-chain fatty acids via beta-oxidation cycle. Catalyzes the formation of 3-oxoacyl-CoA from enoyl-CoA via L-3-hydroxyacyl-CoA. It can also use D-3-hydroxyacyl-CoA and cis-3-enoyl-CoA as substrate. This chain is Fatty acid oxidation complex subunit alpha, found in Pseudomonas paraeruginosa (strain DSM 24068 / PA7) (Pseudomonas aeruginosa (strain PA7)).